Consider the following 557-residue polypeptide: Arginine--tRNA ligase (557 aa).

Positions 132–142 match the 'HIGH' region motif; the sequence is ANPTGDLHLGH.

The protein belongs to the class-I aminoacyl-tRNA synthetase family. In terms of assembly, monomer.

Its subcellular location is the cytoplasm. It carries out the reaction tRNA(Arg) + L-arginine + ATP = L-arginyl-tRNA(Arg) + AMP + diphosphate. The chain is Arginine--tRNA ligase from Bacillus pumilus (strain SAFR-032).